We begin with the raw amino-acid sequence, 538 residues long: UNC93-like protein (538 aa).

Asn45 carries N-linked (GlcNAc...) asparagine glycosylation. Helical transmembrane passes span 46–66 (ISIISIAFMVQFTAFQGTANL), 80–100 (SLSAIYAALVVSCIFLPTLII), 105–125 (VKWTLVCSMLCYAPYIAFQLF), 128–148 (FYTLVPAGILVGMGAAPMWAS), and 170–190 (AIIVRFFGFFFLAWQSAELWG). N-linked (GlcNAc...) asparagine glycosylation occurs at Asn210. A run of 7 helical transmembrane segments spans residues 244-264 (IFEISMIYLSCIVAAVCIIAF), 305-325 (LLIPITVFIGMEQAFIGADFT), 338-358 (IGFVMICFGVVNALCSILFGS), 366-386 (TPIIVLGAVVHFTLITVELFW), 394-414 (IIFYAMSGLWGVGDAVWQTQI), 435-455 (LWESAGFVIAYAYATTLCTQM), and 457-477 (LYILLAVLTLGCIGYVIVEIL).

This sequence belongs to the unc-93 family.

Its subcellular location is the membrane. This Drosophila melanogaster (Fruit fly) protein is UNC93-like protein.